The chain runs to 141 residues: Alpha-lactalbumin (141 aa).

A signal peptide spans 1–19; the sequence is MMPLVPLLLVSIVFPGIQA. In terms of domain architecture, C-type lysozyme spans 20–141; the sequence is TQLTRCELTE…ENLEQWVCKK (122 aa). Intrachain disulfides connect cysteine 25–cysteine 139, cysteine 47–cysteine 130, cysteine 80–cysteine 96, and cysteine 92–cysteine 110. Asparagine 64 carries N-linked (GlcNAc...) asparagine glycosylation. 3 residues coordinate Ca(2+): aspartate 101, aspartate 106, and aspartate 107.

It belongs to the glycosyl hydrolase 22 family. Lactose synthase (LS) is a heterodimer of a catalytic component, beta1,4-galactosyltransferase (beta4Gal-T1) and a regulatory component, alpha-lactalbumin (LA). As to expression, mammary gland specific. Secreted in milk.

It localises to the secreted. In terms of biological role, regulatory subunit of lactose synthase, changes the substrate specificity of galactosyltransferase in the mammary gland making glucose a good acceptor substrate for this enzyme. This enables LS to synthesize lactose, the major carbohydrate component of milk. In other tissues, galactosyltransferase transfers galactose onto the N-acetylglucosamine of the oligosaccharide chains in glycoproteins. The protein is Alpha-lactalbumin (LALBA) of Oryctolagus cuniculus (Rabbit).